The sequence spans 162 residues: 2-C-methyl-D-erythritol 2,4-cyclodiphosphate synthase (162 aa).

Residues Asp8 and His10 each coordinate a divalent metal cation. 4-CDP-2-C-methyl-D-erythritol 2-phosphate-binding positions include 8–10 and 36–37; these read DVH and HS. His44 provides a ligand contact to a divalent metal cation. Residues 58-60, 63-67, 102-108, 134-137, Phe141, and Arg144 contribute to the 4-CDP-2-C-methyl-D-erythritol 2-phosphate site; these read DIG, FPDTD, AQAPKMA, and TTTE.

The protein belongs to the IspF family. In terms of assembly, homotrimer. It depends on a divalent metal cation as a cofactor.

It catalyses the reaction 4-CDP-2-C-methyl-D-erythritol 2-phosphate = 2-C-methyl-D-erythritol 2,4-cyclic diphosphate + CMP. It functions in the pathway isoprenoid biosynthesis; isopentenyl diphosphate biosynthesis via DXP pathway; isopentenyl diphosphate from 1-deoxy-D-xylulose 5-phosphate: step 4/6. Its function is as follows. Involved in the biosynthesis of isopentenyl diphosphate (IPP) and dimethylallyl diphosphate (DMAPP), two major building blocks of isoprenoid compounds. Catalyzes the conversion of 4-diphosphocytidyl-2-C-methyl-D-erythritol 2-phosphate (CDP-ME2P) to 2-C-methyl-D-erythritol 2,4-cyclodiphosphate (ME-CPP) with a corresponding release of cytidine 5-monophosphate (CMP). This Yersinia enterocolitica serotype O:8 / biotype 1B (strain NCTC 13174 / 8081) protein is 2-C-methyl-D-erythritol 2,4-cyclodiphosphate synthase.